A 279-amino-acid chain; its full sequence is ATP synthase subunit delta (279 aa).

Belongs to the ATPase delta chain family. As to quaternary structure, F-type ATPases have 2 components, F(1) - the catalytic core - and F(0) - the membrane proton channel. F(1) has five subunits: alpha(3), beta(3), gamma(1), delta(1), epsilon(1). F(0) has three main subunits: a(1), b(2) and c(10-14). The alpha and beta chains form an alternating ring which encloses part of the gamma chain. F(1) is attached to F(0) by a central stalk formed by the gamma and epsilon chains, while a peripheral stalk is formed by the delta and b chains.

The protein resides in the cell membrane. Its function is as follows. F(1)F(0) ATP synthase produces ATP from ADP in the presence of a proton or sodium gradient. F-type ATPases consist of two structural domains, F(1) containing the extramembraneous catalytic core and F(0) containing the membrane proton channel, linked together by a central stalk and a peripheral stalk. During catalysis, ATP synthesis in the catalytic domain of F(1) is coupled via a rotary mechanism of the central stalk subunits to proton translocation. In terms of biological role, this protein is part of the stalk that links CF(0) to CF(1). It either transmits conformational changes from CF(0) to CF(1) or is implicated in proton conduction. This chain is ATP synthase subunit delta, found in Parafrankia sp. (strain EAN1pec).